A 328-amino-acid chain; its full sequence is Stress response kinase A (328 aa).

Aspartate 201 (proton acceptor) is an active-site residue. Residues asparagine 206 and aspartate 217 each contribute to the Mg(2+) site. Aspartate 217 is a catalytic residue.

This sequence belongs to the SrkA/RdoA protein kinase family. As to quaternary structure, monomer. The cofactor is Mg(2+).

Its subcellular location is the cytoplasm. It catalyses the reaction L-seryl-[protein] + ATP = O-phospho-L-seryl-[protein] + ADP + H(+). The enzyme catalyses L-threonyl-[protein] + ATP = O-phospho-L-threonyl-[protein] + ADP + H(+). A protein kinase that phosphorylates Ser and Thr residues. Probably acts to suppress the effects of stress linked to accumulation of reactive oxygen species. Probably involved in the extracytoplasmic stress response. The polypeptide is Stress response kinase A (Salmonella paratyphi A (strain ATCC 9150 / SARB42)).